Consider the following 126-residue polypeptide: Large ribosomal subunit protein bL12 (126 aa).

It belongs to the bacterial ribosomal protein bL12 family. In terms of assembly, homodimer. Part of the ribosomal stalk of the 50S ribosomal subunit. Forms a multimeric L10(L12)X complex, where L10 forms an elongated spine to which 2 to 4 L12 dimers bind in a sequential fashion. Binds GTP-bound translation factors.

Functionally, forms part of the ribosomal stalk which helps the ribosome interact with GTP-bound translation factors. Is thus essential for accurate translation. This is Large ribosomal subunit protein bL12 from Citrifermentans bemidjiense (strain ATCC BAA-1014 / DSM 16622 / JCM 12645 / Bem) (Geobacter bemidjiensis).